The primary structure comprises 186 residues: Large ribosomal subunit protein uL22 (186 aa).

Composition is skewed to basic and acidic residues over residues 157-167 (VSKATDDEPTK) and 177-186 (RQKEKMLRSE). Residues 157 to 186 (VSKATDDEPTKKKLSKKKLQRQKEKMLRSE) form a disordered region.

Belongs to the universal ribosomal protein uL22 family.

The chain is Large ribosomal subunit protein uL22 (RpL17) from Drosophila yakuba (Fruit fly).